A 228-amino-acid polypeptide reads, in one-letter code: Carboxy-S-adenosyl-L-methionine synthase (228 aa).

S-adenosyl-L-methionine-binding positions include Tyr30, 55–57 (GSS), 79–80 (DN), and 103–104 (DV).

The protein belongs to the class I-like SAM-binding methyltransferase superfamily. Cx-SAM synthase family.

The catalysed reaction is prephenate + S-adenosyl-L-methionine = carboxy-S-adenosyl-L-methionine + 3-phenylpyruvate + H2O. In terms of biological role, catalyzes the conversion of S-adenosyl-L-methionine (SAM) to carboxy-S-adenosyl-L-methionine (Cx-SAM). This is Carboxy-S-adenosyl-L-methionine synthase from Staphylococcus epidermidis (strain ATCC 35984 / DSM 28319 / BCRC 17069 / CCUG 31568 / BM 3577 / RP62A).